We begin with the raw amino-acid sequence, 192 residues long: Mediator of RNA polymerase II transcription subunit 29 (192 aa).

The tract at residues 32 to 51 (MQQQSPQQMQPAPVPQQTQQ) is disordered.

This sequence belongs to the Mediator complex subunit 29 family. In terms of assembly, component of the Mediator complex.

The protein resides in the nucleus. Component of the Mediator complex, a coactivator involved in the regulated transcription of nearly all RNA polymerase II-dependent genes. Mediator functions as a bridge to convey information from gene-specific regulatory proteins to the basal RNA polymerase II transcription machinery. Mediator is recruited to promoters by direct interactions with regulatory proteins and serves as a scaffold for the assembly of a functional preinitiation complex with RNA polymerase II and the general transcription factors. This Bombyx mori (Silk moth) protein is Mediator of RNA polymerase II transcription subunit 29 (ix).